The sequence spans 341 residues: Adhesion protein Bd37 (341 aa).

The signal sequence occupies residues 1–21 (MKTSKILNTAAICLLAMGFNG). N-linked (GlcNAc...) asparagine glycosylation is found at N23 and N30. The cysteines at positions 26 and 307 are disulfide-linked. The segment at 36–75 (AAANPVVSTPGNDAQQAGTQQGGANSKSVPEQQPQQAAGE) is disordered. The segment covering 49 to 59 (AQQAGTQQGGA) has biased composition (low complexity). Residues 60–75 (NSKSVPEQQPQQAAGE) show a composition bias toward polar residues. S311 carries GPI-anchor amidated serine lipidation. A propeptide spans 312–341 (GQGSSPKKPSFAAVPSSLSAIVFGIIVSMF) (removed in mature form).

Post-translationally, the signal sequence is cleaved. In terms of processing, glycosylated. Palmitoylated. Post-translationally, not myristoylated.

Its subcellular location is the cell membrane. It localises to the secreted. The protein resides in the vesicle. Binds to host erythrocytes. In Babesia divergens, this protein is Adhesion protein Bd37.